Here is a 134-residue protein sequence, read N- to C-terminus: Antifungal protein ginkbilobin-2 (134 aa).

A signal peptide spans 1–26 (MKTMRMNSAFILAFALAAAMLILTEA). In terms of domain architecture, Gnk2-homologous spans 29 to 134 (TAFVSSACNT…CFIQYEQRSF (106 aa)). 3 disulfide bridges follow: cysteine 36/cysteine 112, cysteine 88/cysteine 97, and cysteine 100/cysteine 125. Asparagine 37 contacts alpha-D-mannopyranose. 2 residues coordinate alpha-D-mannopyranose: arginine 119 and glutamate 130.

As to quaternary structure, binds actin in vitro.

It is found in the secreted. Its function is as follows. Possesses antifungal activity against F.oxysporum, T.reesei and C.albicans. Weakly inhibits the aspartic acid protease pepsin activity. Exerts antifungal activity against S.cerevisiae and F.culmorum through its carbohydrate-binding specificity. Acts as a lectin that stricly recognizes alpha-1,2-linked mannose moieties and interacts with the yeast cell wall mannan polysaccharide. Can interfere with the fungal actin remodeling resulting to the activation of an actin-dependent cell death. This Ginkgo biloba (Ginkgo) protein is Antifungal protein ginkbilobin-2.